Here is a 184-residue protein sequence, read N- to C-terminus: MIEHHPTTIYGTTIVTVRKGNKVVIAGDGQVSLGNTVMKGNARKVRRIGKGNVIAGFAGATADAFTLLERLEAKLEQYPDQLMRASVELAKDWRTDRYLRKLEAMMLVADSKVTLALTGTGDVLEPEHGVMAIGSGGNYALAAARALVDTDKSAEEIARKAMDIAADICIYTNHNIIVESLDAE.

Threonine 12 is a catalytic residue. Alanine 166, cysteine 169, and threonine 172 together coordinate Na(+).

The protein belongs to the peptidase T1B family. HslV subfamily. As to quaternary structure, a double ring-shaped homohexamer of HslV is capped on each side by a ring-shaped HslU homohexamer. The assembly of the HslU/HslV complex is dependent on binding of ATP.

The protein resides in the cytoplasm. The catalysed reaction is ATP-dependent cleavage of peptide bonds with broad specificity.. Allosterically activated by HslU binding. In terms of biological role, protease subunit of a proteasome-like degradation complex believed to be a general protein degrading machinery. The polypeptide is ATP-dependent protease subunit HslV (Brucella anthropi (strain ATCC 49188 / DSM 6882 / CCUG 24695 / JCM 21032 / LMG 3331 / NBRC 15819 / NCTC 12168 / Alc 37) (Ochrobactrum anthropi)).